The sequence spans 584 residues: DNA ligase (584 aa).

Glu249 serves as a coordination point for ATP. Residue Lys251 is the N6-AMP-lysine intermediate of the active site. Arg256, Arg271, Glu301, Phe341, Arg416, and Lys422 together coordinate ATP.

This sequence belongs to the ATP-dependent DNA ligase family. Mg(2+) is required as a cofactor.

The enzyme catalyses ATP + (deoxyribonucleotide)n-3'-hydroxyl + 5'-phospho-(deoxyribonucleotide)m = (deoxyribonucleotide)n+m + AMP + diphosphate.. Functionally, DNA ligase that seals nicks in double-stranded DNA during DNA replication, DNA recombination and DNA repair. In Pyrobaculum arsenaticum (strain DSM 13514 / JCM 11321 / PZ6), this protein is DNA ligase.